Here is a 142-residue protein sequence, read N- to C-terminus: Hdr-like menaquinol oxidoreductase cytochrome c subunit (142 aa).

Over 1 to 6 (MYNKKY) the chain is Cytoplasmic. A helical membrane pass occupies residues 7 to 27 (VIPLILVFLIGFFTPYWYNAM). The Extracellular portion of the chain corresponds to 28-142 (AGTLGHVPTL…GIEELSKYFS (115 aa)). Cys93, Cys96, His97, Cys104, Cys107, His108, Cys117, Cys120, and His121 together coordinate heme.

In terms of assembly, consists of five subunits: an integral membrane subunit, a cytochrome b-like subunit, a cytochrome c subunit and two iron-sulfur subunits. Binds 3 heme groups per subunit.

It is found in the cell membrane. In terms of biological role, has menaquinol-oxidizing activity. HmeA, HmeB and HmeE subunits may together catalyze electron transfer from menaquinol to cytochrome c. The polypeptide is Hdr-like menaquinol oxidoreductase cytochrome c subunit (hmeE) (Archaeoglobus fulgidus (strain ATCC 49558 / DSM 4304 / JCM 9628 / NBRC 100126 / VC-16)).